A 164-amino-acid chain; its full sequence is Photosystem II extrinsic protein V (164 aa).

An N-terminal signal peptide occupies residues 1 to 27 (MNRISIYRIKVLAFLFAVSTYVYPASS). Heme c-binding residues include cysteine 64, cysteine 67, histidine 68, and histidine 119.

The protein belongs to the cytochrome c family. PsbV subfamily. As to quaternary structure, PSII is composed of 1 copy each of membrane proteins PsbA, PsbB, PsbC, PsbD, PsbE, PsbF, PsbH, PsbI, PsbJ, PsbK, PsbL, PsbM, PsbT, PsbY, PsbZ, Psb30/Ycf12, at least 3 peripheral proteins of the oxygen-evolving complex and a large number of cofactors. It forms dimeric complexes. The extrinsic subunits in red algae are PsbO (OEC33), PsbQ', cytochrome c-550 and PsbU. Heme c serves as cofactor.

It is found in the plastid. Its subcellular location is the chloroplast thylakoid membrane. One of the extrinsic, lumenal subunits of photosystem II (PSII). PSII is a light-driven water plastoquinone oxidoreductase, using light energy to abstract electrons from H(2)O, generating a proton gradient subsequently used for ATP formation. The extrinsic proteins stabilize the structure of photosystem II oxygen-evolving complex (OEC), the ion environment of oxygen evolution and protect the OEC against heat-induced inactivation. This chain is Photosystem II extrinsic protein V, found in Cyanidium caldarium (Red alga).